We begin with the raw amino-acid sequence, 178 residues long: ATP synthase subunit delta (178 aa).

It belongs to the ATPase delta chain family. F-type ATPases have 2 components, F(1) - the catalytic core - and F(0) - the membrane proton channel. F(1) has five subunits: alpha(3), beta(3), gamma(1), delta(1), epsilon(1). F(0) has three main subunits: a(1), b(2) and c(10-14). The alpha and beta chains form an alternating ring which encloses part of the gamma chain. F(1) is attached to F(0) by a central stalk formed by the gamma and epsilon chains, while a peripheral stalk is formed by the delta and b chains.

It localises to the cell membrane. Functionally, f(1)F(0) ATP synthase produces ATP from ADP in the presence of a proton or sodium gradient. F-type ATPases consist of two structural domains, F(1) containing the extramembraneous catalytic core and F(0) containing the membrane proton channel, linked together by a central stalk and a peripheral stalk. During catalysis, ATP synthesis in the catalytic domain of F(1) is coupled via a rotary mechanism of the central stalk subunits to proton translocation. This protein is part of the stalk that links CF(0) to CF(1). It either transmits conformational changes from CF(0) to CF(1) or is implicated in proton conduction. The protein is ATP synthase subunit delta of Streptococcus thermophilus (strain ATCC BAA-250 / LMG 18311).